Here is a 371-residue protein sequence, read N- to C-terminus: Anhydro-N-acetylmuramic acid kinase (371 aa).

Gly9 to Asp16 contacts ATP.

This sequence belongs to the anhydro-N-acetylmuramic acid kinase family.

The enzyme catalyses 1,6-anhydro-N-acetyl-beta-muramate + ATP + H2O = N-acetyl-D-muramate 6-phosphate + ADP + H(+). The protein operates within amino-sugar metabolism; 1,6-anhydro-N-acetylmuramate degradation. It participates in cell wall biogenesis; peptidoglycan recycling. Its function is as follows. Catalyzes the specific phosphorylation of 1,6-anhydro-N-acetylmuramic acid (anhMurNAc) with the simultaneous cleavage of the 1,6-anhydro ring, generating MurNAc-6-P. Is required for the utilization of anhMurNAc either imported from the medium or derived from its own cell wall murein, and thus plays a role in cell wall recycling. This Azorhizobium caulinodans (strain ATCC 43989 / DSM 5975 / JCM 20966 / LMG 6465 / NBRC 14845 / NCIMB 13405 / ORS 571) protein is Anhydro-N-acetylmuramic acid kinase.